The chain runs to 355 residues: Erythronate-4-phosphate dehydrogenase (355 aa).

Positions 45 and 66 each coordinate substrate. An NAD(+)-binding site is contributed by aspartate 146. Arginine 206 is a catalytic residue. Aspartate 229 lines the NAD(+) pocket. The active site involves glutamate 234. Histidine 251 (proton donor) is an active-site residue. An NAD(+)-binding site is contributed by glycine 254. Tyrosine 255 is a binding site for substrate.

The protein belongs to the D-isomer specific 2-hydroxyacid dehydrogenase family. PdxB subfamily. As to quaternary structure, homodimer.

The protein localises to the cytoplasm. The catalysed reaction is 4-phospho-D-erythronate + NAD(+) = (R)-3-hydroxy-2-oxo-4-phosphooxybutanoate + NADH + H(+). Its pathway is cofactor biosynthesis; pyridoxine 5'-phosphate biosynthesis; pyridoxine 5'-phosphate from D-erythrose 4-phosphate: step 2/5. Its function is as follows. Catalyzes the oxidation of erythronate-4-phosphate to 3-hydroxy-2-oxo-4-phosphonooxybutanoate. The sequence is that of Erythronate-4-phosphate dehydrogenase from Acinetobacter baumannii (strain AB307-0294).